The chain runs to 526 residues: Plant intracellular Ras-group-related LRR protein 5 (526 aa).

11 LRR repeats span residues 229–252 (LSSL…IGGL), 253–275 (ISLT…IGDL), 276–297 (LNLV…SFNR), 298–321 (LIHL…IGSL), 323–344 (SLKK…ISGC), 346–367 (SMEE…VGKL), 368–390 (STLE…MSSM), 391–414 (ANLK…CYAK), 416–437 (LVKL…LIGN), 438–463 (LEKL…TLSN), and 465–484 (RVLQ…ITEK). The GVYW; degenerate motif lies at 485-492 (GAQAVVQY).

Belongs to the SHOC2 family. As to expression, widely expressed but preferentially in roots.

Its function is as follows. Leucine-rich repeat protein that likely mediates protein interactions, possibly in the context of signal transduction. The polypeptide is Plant intracellular Ras-group-related LRR protein 5 (PIRL5) (Arabidopsis thaliana (Mouse-ear cress)).